Reading from the N-terminus, the 181-residue chain is Peptidyl-tRNA hydrolase (181 aa).

A tRNA-binding site is contributed by Tyr14. The active-site Proton acceptor is the His19. Positions 62, 64, and 108 each coordinate tRNA.

This sequence belongs to the PTH family. In terms of assembly, monomer.

It is found in the cytoplasm. It catalyses the reaction an N-acyl-L-alpha-aminoacyl-tRNA + H2O = an N-acyl-L-amino acid + a tRNA + H(+). Functionally, hydrolyzes ribosome-free peptidyl-tRNAs (with 1 or more amino acids incorporated), which drop off the ribosome during protein synthesis, or as a result of ribosome stalling. Its function is as follows. Catalyzes the release of premature peptidyl moieties from peptidyl-tRNA molecules trapped in stalled 50S ribosomal subunits, and thus maintains levels of free tRNAs and 50S ribosomes. The chain is Peptidyl-tRNA hydrolase from Campylobacter jejuni (strain RM1221).